A 135-amino-acid polypeptide reads, in one-letter code: Hemoglobin subunit beta-3 (135 aa).

The 134-residue stretch at 2 to 135 (HWTAEEKALV…VVDALSKAYQ (134 aa)) folds into the Globin domain. 2 residues coordinate heme b: histidine 57 and histidine 81.

It belongs to the globin family. In terms of assembly, hb 3 is a heterotetramer of two alpha and two beta-3 chains. As to expression, red blood cells (at protein level).

Functionally, involved in oxygen transport from gills to the various peripheral tissues. This chain is Hemoglobin subunit beta-3, found in Somniosus microcephalus (Greenland sleeper shark).